The primary structure comprises 867 residues: G-protein coupled receptor family C group 6 member A (867 aa).

A signal peptide spans 1–19; that stretch reads MDLMSFILLWAGLMKVAEA. At 20-566 the chain is on the extracellular side; that stretch reads SIAQFSQLGA…EYFDWNSGFA (547 aa). Residues Asn51, Asn55, Asn97, Asn296, Asn308, Asn336, Asn356, Asn370, Asn527, and Asn547 are each glycosylated (N-linked (GlcNAc...) asparagine). The chain crosses the membrane as a helical span at residues 567–587; that stretch reads IVLLILAALGVLLLFFMSALF. At 588–602 the chain is on the cytoplasmic side; it reads FWQRHSPVVKAAGGP. The helical transmembrane segment at 603-623 threads the bilayer; the sequence is LCHLILVSLLGSFISVVFFVG. The Extracellular portion of the chain corresponds to 624 to 634; it reads EPSDLTCRARQ. The chain crosses the membrane as a helical span at residues 635–655; sequence VIFGFSFTLCVSCILVKSLKI. The Cytoplasmic segment spans residues 656-675; it reads LLAFEMNFELKELLCMLYKP. A helical membrane pass occupies residues 676–696; it reads YMIVSVGMGVQIIICTVWLTL. Residues 697–716 are Extracellular-facing; the sequence is YKPFKDKEVQTESILLECNE. The chain crosses the membrane as a helical span at residues 717–737; the sequence is GFYVMFWLMLGYIALLALFCF. Over 738 to 754 the chain is Cytoplasmic; sequence TFAYIGRKLPQKYNEAK. A helical membrane pass occupies residues 755-775; that stretch reads FITFSMVICLMAWIIFIPIHV. Residues 776–781 lie on the Extracellular side of the membrane; the sequence is TTSGKY. A helical transmembrane segment spans residues 782 to 802; it reads VPAVEMVVILISNYGILSCHF. The Cytoplasmic segment spans residues 803–867; the sequence is LPKSYIILFK…LSFVPEEKHE (65 aa).

The protein belongs to the G-protein coupled receptor 3 family. In terms of assembly, homodimer; disulfide-linked.

It localises to the cell membrane. Olfactory receptor that is activated by amino acids that act as potent odorants in fish. Displays preference for acidic amino acids such as Glu over basic amino acids. The polypeptide is G-protein coupled receptor family C group 6 member A (gprc6a) (Danio rerio (Zebrafish)).